A 228-amino-acid polypeptide reads, in one-letter code: Ran-binding protein 1 homolog a (228 aa).

Residues 1 to 13 (MATNEPEHEHRDE) are compositionally biased toward basic and acidic residues. Disordered stretches follow at residues 1–30 (MATN…QVAP) and 159–228 (SEEE…GPST). Acidic residues predominate over residues 14–24 (EEAGANEDEDT). The RanBD1 domain maps to 27-162 (QVAPIVRLEE…FKEVAESEEE (136 aa)). A compositionally biased stretch (basic and acidic residues) spans 179 to 228 (LTVEETKTEEKTEAKAVETAKTEVKAEEKKESEAEKSGEAKKTEESGPST).

Interacts with the GTP-bound form of RAN1, RAN2 and RAN3. Ubiquitous. Preferentially expressed in root tips and gynoecium.

Its subcellular location is the nucleus. It is found in the nuclear pore complex. The chain is Ran-binding protein 1 homolog a (RANBP1A) from Arabidopsis thaliana (Mouse-ear cress).